A 243-amino-acid chain; its full sequence is Probable 6-phosphogluconolactonase (243 aa).

The protein belongs to the glucosamine/galactosamine-6-phosphate isomerase family. 6-phosphogluconolactonase subfamily.

The catalysed reaction is 6-phospho-D-glucono-1,5-lactone + H2O = 6-phospho-D-gluconate + H(+). Its pathway is carbohydrate degradation; pentose phosphate pathway; D-ribulose 5-phosphate from D-glucose 6-phosphate (oxidative stage): step 2/3. In terms of biological role, hydrolysis of 6-phosphogluconolactone to 6-phosphogluconate. In Drosophila melanogaster (Fruit fly), this protein is Probable 6-phosphogluconolactonase.